We begin with the raw amino-acid sequence, 262 residues long: Acyl-[acyl-carrier-protein]--UDP-N-acetylglucosamine O-acyltransferase (262 aa).

Belongs to the transferase hexapeptide repeat family. LpxA subfamily. Homotrimer.

It localises to the cytoplasm. It carries out the reaction a (3R)-hydroxyacyl-[ACP] + UDP-N-acetyl-alpha-D-glucosamine = a UDP-3-O-[(3R)-3-hydroxyacyl]-N-acetyl-alpha-D-glucosamine + holo-[ACP]. It participates in glycolipid biosynthesis; lipid IV(A) biosynthesis; lipid IV(A) from (3R)-3-hydroxytetradecanoyl-[acyl-carrier-protein] and UDP-N-acetyl-alpha-D-glucosamine: step 1/6. Involved in the biosynthesis of lipid A, a phosphorylated glycolipid that anchors the lipopolysaccharide to the outer membrane of the cell. In Shigella flexneri serotype 5b (strain 8401), this protein is Acyl-[acyl-carrier-protein]--UDP-N-acetylglucosamine O-acyltransferase.